The following is a 186-amino-acid chain: Ribosome-recycling factor (186 aa).

It belongs to the RRF family.

Its subcellular location is the cytoplasm. Its function is as follows. Responsible for the release of ribosomes from messenger RNA at the termination of protein biosynthesis. May increase the efficiency of translation by recycling ribosomes from one round of translation to another. In Rickettsia conorii (strain ATCC VR-613 / Malish 7), this protein is Ribosome-recycling factor.